A 105-amino-acid chain; its full sequence is Flagellar transcriptional regulator FlhD (105 aa).

Belongs to the FlhD family. In terms of assembly, homodimer; disulfide-linked. Forms a heterohexamer composed of two FlhC and four FlhD subunits. Each FlhC binds a FlhD dimer, forming a heterotrimer, and a hexamer assembles by dimerization of two heterotrimers.

The protein resides in the cytoplasm. Its function is as follows. Functions in complex with FlhC as a master transcriptional regulator that regulates transcription of several flagellar and non-flagellar operons by binding to their promoter region. Activates expression of class 2 flagellar genes, including fliA, which is a flagellum-specific sigma factor that turns on the class 3 genes. Also regulates genes whose products function in a variety of physiological pathways. The sequence is that of Flagellar transcriptional regulator FlhD from Ralstonia nicotianae (strain ATCC BAA-1114 / GMI1000) (Ralstonia solanacearum).